Here is a 177-residue protein sequence, read N- to C-terminus: Large ribosomal subunit protein uL6 (177 aa).

It belongs to the universal ribosomal protein uL6 family. Part of the 50S ribosomal subunit.

Functionally, this protein binds to the 23S rRNA, and is important in its secondary structure. It is located near the subunit interface in the base of the L7/L12 stalk, and near the tRNA binding site of the peptidyltransferase center. The chain is Large ribosomal subunit protein uL6 from Agrobacterium fabrum (strain C58 / ATCC 33970) (Agrobacterium tumefaciens (strain C58)).